A 162-amino-acid polypeptide reads, in one-letter code: Putative pre-16S rRNA nuclease (162 aa).

This sequence belongs to the YqgF nuclease family.

It localises to the cytoplasm. Functionally, could be a nuclease involved in processing of the 5'-end of pre-16S rRNA. This Brucella melitensis biotype 2 (strain ATCC 23457) protein is Putative pre-16S rRNA nuclease.